The chain runs to 331 residues: MLIAQRPTLTEESISEFRSRFVIEPLEPGFGYTLGNSLRRTLLSSIPGAAVTSIRIDGVLHEFSTVPGVKEDVTEIILNIKGLVVSSEHDEPITAYLRKQGAGQVTAADISAPAGVEIHNPELVIATLNEKAKFELELTIERGRGYVSATQNRSEFSEAGQIPVDSIYSPVLKVTYRVEATRAGERTDFDRLVVDVETKSAITPRDAIASAGRTLTELFGLARELNSAAEGIEIGPAPVDAVLSSELSMPIEDLDLSVRSYNCLKREGIHNVSELVALSETQLMNIRNFGQKSVDEVKDKLVELGLSLKDAVPGFDGAHYYSYDEDETTTN.

The interval 1–226 (MLIAQRPTLT…ELFGLARELN (226 aa)) is alpha N-terminal domain (alpha-NTD). Residues 243-331 (LSSELSMPIE…SYDEDETTTN (89 aa)) are alpha C-terminal domain (alpha-CTD).

The protein belongs to the RNA polymerase alpha chain family. In terms of assembly, homodimer. The RNAP catalytic core consists of 2 alpha, 1 beta, 1 beta' and 1 omega subunit. When a sigma factor is associated with the core the holoenzyme is formed, which can initiate transcription.

It carries out the reaction RNA(n) + a ribonucleoside 5'-triphosphate = RNA(n+1) + diphosphate. Its function is as follows. DNA-dependent RNA polymerase catalyzes the transcription of DNA into RNA using the four ribonucleoside triphosphates as substrates. This Clavibacter sepedonicus (Clavibacter michiganensis subsp. sepedonicus) protein is DNA-directed RNA polymerase subunit alpha.